Consider the following 225-residue polypeptide: PKHD-type hydroxylase YbiX (225 aa).

Positions 78–177 (TLSTPLFNRY…RVASFMWIQS (100 aa)) constitute a Fe2OG dioxygenase domain. Residues His-96, Asp-98, and His-158 each coordinate Fe cation. Arg-168 lines the 2-oxoglutarate pocket.

The cofactor is Fe(2+). L-ascorbate is required as a cofactor.

This Escherichia fergusonii (strain ATCC 35469 / DSM 13698 / CCUG 18766 / IAM 14443 / JCM 21226 / LMG 7866 / NBRC 102419 / NCTC 12128 / CDC 0568-73) protein is PKHD-type hydroxylase YbiX.